The primary structure comprises 1014 residues: Exportin-T (1014 aa).

Belongs to the exportin family.

The protein resides in the nucleus. It localises to the cytoplasm. Its function is as follows. tRNA nucleus export receptor which facilitates tRNA translocation across the nuclear pore complex. Involved in pre-tRNA splicing, probably by affecting the interaction of pre-tRNA with splicing endonuclease. This Podospora anserina (strain S / ATCC MYA-4624 / DSM 980 / FGSC 10383) (Pleurage anserina) protein is Exportin-T (LOS1).